The following is a 165-amino-acid chain: MKPVTTDLCDAHEDRLADGTLRVMAPVFRAFGKQGAFAGPAATLKVFEDNSLVRTALEAPGQGRVLVIDGGGSLRCALVGGNLGLLAEKNGWVGIVVNGCIRDTAELDVCDIGIRALAVHPQKSQKRNVGESDVAVQMPGAVVRPGNWIYVDADGVLVSDERLGN.

Substrate-binding positions include 80–83 (GGNL) and arginine 102. Residue aspartate 103 participates in a divalent metal cation binding.

It belongs to the class II aldolase/RraA-like family. Homotrimer. Requires a divalent metal cation as cofactor.

It catalyses the reaction 4-hydroxy-4-methyl-2-oxoglutarate = 2 pyruvate. The catalysed reaction is oxaloacetate + H(+) = pyruvate + CO2. In terms of biological role, catalyzes the aldol cleavage of 4-hydroxy-4-methyl-2-oxoglutarate (HMG) into 2 molecules of pyruvate. Also contains a secondary oxaloacetate (OAA) decarboxylase activity due to the common pyruvate enolate transition state formed following C-C bond cleavage in the retro-aldol and decarboxylation reactions. This Cupriavidus necator (strain ATCC 17699 / DSM 428 / KCTC 22496 / NCIMB 10442 / H16 / Stanier 337) (Ralstonia eutropha) protein is Putative 4-hydroxy-4-methyl-2-oxoglutarate aldolase.